The chain runs to 31 residues: MPTITSYFGFLLAALTVTSALFIGLSKIRLI.

A helical membrane pass occupies residues 4-26 (ITSYFGFLLAALTVTSALFIGLS).

The protein belongs to the PetL family. The 4 large subunits of the cytochrome b6-f complex are cytochrome b6, subunit IV (17 kDa polypeptide, PetD), cytochrome f and the Rieske protein, while the 4 small subunits are PetG, PetL, PetM and PetN. The complex functions as a dimer.

The protein resides in the plastid. It localises to the chloroplast thylakoid membrane. In terms of biological role, component of the cytochrome b6-f complex, which mediates electron transfer between photosystem II (PSII) and photosystem I (PSI), cyclic electron flow around PSI, and state transitions. PetL is important for photoautotrophic growth as well as for electron transfer efficiency and stability of the cytochrome b6-f complex. This Daucus carota (Wild carrot) protein is Cytochrome b6-f complex subunit 6.